Reading from the N-terminus, the 355-residue chain is UDP-N-acetylglucosamine--N-acetylmuramyl-(pentapeptide) pyrophosphoryl-undecaprenol N-acetylglucosamine transferase (355 aa).

UDP-N-acetyl-alpha-D-glucosamine contacts are provided by residues 14–16, asparagine 126, arginine 162, serine 190, isoleucine 243, 262–267, and glutamine 288; these read SGG and ALTVSE.

It belongs to the glycosyltransferase 28 family. MurG subfamily.

It is found in the cell inner membrane. It catalyses the reaction di-trans,octa-cis-undecaprenyl diphospho-N-acetyl-alpha-D-muramoyl-L-alanyl-D-glutamyl-meso-2,6-diaminopimeloyl-D-alanyl-D-alanine + UDP-N-acetyl-alpha-D-glucosamine = di-trans,octa-cis-undecaprenyl diphospho-[N-acetyl-alpha-D-glucosaminyl-(1-&gt;4)]-N-acetyl-alpha-D-muramoyl-L-alanyl-D-glutamyl-meso-2,6-diaminopimeloyl-D-alanyl-D-alanine + UDP + H(+). The protein operates within cell wall biogenesis; peptidoglycan biosynthesis. Cell wall formation. Catalyzes the transfer of a GlcNAc subunit on undecaprenyl-pyrophosphoryl-MurNAc-pentapeptide (lipid intermediate I) to form undecaprenyl-pyrophosphoryl-MurNAc-(pentapeptide)GlcNAc (lipid intermediate II). The chain is UDP-N-acetylglucosamine--N-acetylmuramyl-(pentapeptide) pyrophosphoryl-undecaprenol N-acetylglucosamine transferase from Blochmanniella pennsylvanica (strain BPEN).